The sequence spans 315 residues: Glutamyl-Q tRNA(Asp) synthetase (315 aa).

Residues 23-27 and Glu59 each bind L-glutamate; that span reads RFAPS. Residues 26 to 36 carry the 'HIGH' region motif; sequence PSPTGPLHIGS. Residues Cys115, Cys117, Tyr142, and Cys146 each coordinate Zn(2+). The L-glutamate site is built by Tyr202 and Arg220. The 'KMSKS' region motif lies at 258-262; sequence KLSKQ. An ATP-binding site is contributed by Lys261.

The protein belongs to the class-I aminoacyl-tRNA synthetase family. GluQ subfamily. Requires Zn(2+) as cofactor.

Functionally, catalyzes the tRNA-independent activation of glutamate in presence of ATP and the subsequent transfer of glutamate onto a tRNA(Asp). Glutamate is transferred on the 2-amino-5-(4,5-dihydroxy-2-cyclopenten-1-yl) moiety of the queuosine in the wobble position of the QUC anticodon. The protein is Glutamyl-Q tRNA(Asp) synthetase of Ralstonia nicotianae (strain ATCC BAA-1114 / GMI1000) (Ralstonia solanacearum).